The sequence spans 218 residues: Cytidylate kinase (218 aa).

ATP is bound at residue 10–18 (GPAGSGKST).

The protein belongs to the cytidylate kinase family. Type 1 subfamily.

It is found in the cytoplasm. It carries out the reaction CMP + ATP = CDP + ADP. The catalysed reaction is dCMP + ATP = dCDP + ADP. In Fusobacterium nucleatum subsp. nucleatum (strain ATCC 25586 / DSM 15643 / BCRC 10681 / CIP 101130 / JCM 8532 / KCTC 2640 / LMG 13131 / VPI 4355), this protein is Cytidylate kinase.